A 138-amino-acid chain; its full sequence is MFVKLCGILAFAVTYASSDCLQCICKKESECKPVGCNDDVGSLSCGYYQIKLSYYKDCGQPGKRAGESVEAAWRRCSDELDCASTCVQSYYNRYKKQCAGTGQGACEIMARNHNGGPRGCKKSATLGYWNGIKGLGCS.

A signal peptide spans 1–18 (MFVKLCGILAFAVTYASS). Residues 19–138 (DCLQCICKKE…WNGIKGLGCS (120 aa)) enclose the I-type lysozyme domain. 6 disulfide bridges follow: cysteine 20-cysteine 106, cysteine 25-cysteine 31, cysteine 36-cysteine 45, cysteine 58-cysteine 86, cysteine 76-cysteine 82, and cysteine 98-cysteine 120. The active-site Proton donor is glutamate 28. Aspartate 39 acts as the Nucleophile in catalysis. 51–57 (KLSYYKD) contacts substrate. Substrate is bound by residues tyrosine 90 and 113-115 (HNG).

This sequence belongs to the glycosyl hydrolase 22 family. Type-I lysozyme subfamily. As to expression, expressed in pharyngeal gland cells and duct projections, coelomocytes and intestine.

It carries out the reaction Hydrolysis of (1-&gt;4)-beta-linkages between N-acetylmuramic acid and N-acetyl-D-glucosamine residues in a peptidoglycan and between N-acetyl-D-glucosamine residues in chitodextrins.. Functionally, has bacteriolytic activity against Gram-positive bacteria. This chain is Invertebrate-type lysozyme 6, found in Caenorhabditis elegans.